The following is a 205-amino-acid chain: Small ribosomal subunit protein uS4 (205 aa).

One can recognise an S4 RNA-binding domain in the interval 94-157 (SRLDTVVYRM…KQIPLIQESV (64 aa)).

The protein belongs to the universal ribosomal protein uS4 family. Part of the 30S ribosomal subunit. Contacts protein S5. The interaction surface between S4 and S5 is involved in control of translational fidelity.

One of the primary rRNA binding proteins, it binds directly to 16S rRNA where it nucleates assembly of the body of the 30S subunit. Its function is as follows. With S5 and S12 plays an important role in translational accuracy. The protein is Small ribosomal subunit protein uS4 of Rickettsia felis (strain ATCC VR-1525 / URRWXCal2) (Rickettsia azadi).